We begin with the raw amino-acid sequence, 219 residues long: Cytidylate kinase (219 aa).

Gly-15–Thr-23 serves as a coordination point for ATP.

It belongs to the cytidylate kinase family. Type 1 subfamily.

It is found in the cytoplasm. The catalysed reaction is CMP + ATP = CDP + ADP. It carries out the reaction dCMP + ATP = dCDP + ADP. This is Cytidylate kinase from Brucella suis biovar 1 (strain 1330).